Consider the following 78-residue polypeptide: Acyl carrier protein (78 aa).

Positions 1 to 77 (MSEVEKKVID…DAIDYIEKNL (77 aa)) constitute a Carrier domain. At Ser-37 the chain carries O-(pantetheine 4'-phosphoryl)serine.

This sequence belongs to the acyl carrier protein (ACP) family. In terms of processing, 4'-phosphopantetheine is transferred from CoA to a specific serine of apo-ACP by AcpS. This modification is essential for activity because fatty acids are bound in thioester linkage to the sulfhydryl of the prosthetic group.

It is found in the cytoplasm. It participates in lipid metabolism; fatty acid biosynthesis. Functionally, carrier of the growing fatty acid chain in fatty acid biosynthesis. The protein is Acyl carrier protein of Porphyromonas gingivalis (strain ATCC 33277 / DSM 20709 / CIP 103683 / JCM 12257 / NCTC 11834 / 2561).